Here is a 300-residue protein sequence, read N- to C-terminus: tRNA pseudouridine synthase A (300 aa).

Aspartate 67 functions as the Nucleophile in the catalytic mechanism. Substrate is bound at residue tyrosine 125.

Belongs to the tRNA pseudouridine synthase TruA family. In terms of assembly, homodimer.

It carries out the reaction uridine(38/39/40) in tRNA = pseudouridine(38/39/40) in tRNA. Its function is as follows. Formation of pseudouridine at positions 38, 39 and 40 in the anticodon stem and loop of transfer RNAs. The sequence is that of tRNA pseudouridine synthase A from Synechococcus sp. (strain CC9902).